The sequence spans 213 residues: Na(+)-translocating NADH-quinone reductase subunit D (213 aa).

Helical transmembrane passes span 22–42, 43–63, 77–97, 101–121, 131–151, and 183–203; these read LIAI…TTAL, TMGF…SLLR, IIIS…FFTI, LSVF…AESM, FLDG…ISII, and LGLM…IWIV.

The protein belongs to the NqrDE/RnfAE family. As to quaternary structure, composed of six subunits; NqrA, NqrB, NqrC, NqrD, NqrE and NqrF.

It localises to the cell inner membrane. It catalyses the reaction a ubiquinone + n Na(+)(in) + NADH + H(+) = a ubiquinol + n Na(+)(out) + NAD(+). In terms of biological role, NQR complex catalyzes the reduction of ubiquinone-1 to ubiquinol by two successive reactions, coupled with the transport of Na(+) ions from the cytoplasm to the periplasm. NqrA to NqrE are probably involved in the second step, the conversion of ubisemiquinone to ubiquinol. This is Na(+)-translocating NADH-quinone reductase subunit D from Chlamydia trachomatis serovar L2 (strain ATCC VR-902B / DSM 19102 / 434/Bu).